A 101-amino-acid chain; its full sequence is Small ribosomal subunit protein eS24 (101 aa).

Belongs to the eukaryotic ribosomal protein eS24 family.

The chain is Small ribosomal subunit protein eS24 from Methanosarcina mazei (strain ATCC BAA-159 / DSM 3647 / Goe1 / Go1 / JCM 11833 / OCM 88) (Methanosarcina frisia).